Reading from the N-terminus, the 246-residue chain is Ribulose-phosphate 3-epimerase (246 aa).

A substrate-binding site is contributed by S9. 3 residues coordinate a divalent metal cation: H34, D36, and H83. D36 (proton acceptor) is an active-site residue. Residues H83, 159–162, 188–190, and 210–212 contribute to the substrate site; these read GFGG, DGG, and GTS. Position 188 (D188) interacts with a divalent metal cation. D188 functions as the Proton donor in the catalytic mechanism.

It belongs to the ribulose-phosphate 3-epimerase family. The cofactor is Co(2+). Fe(2+) is required as a cofactor. Mn(2+) serves as cofactor. Requires Zn(2+) as cofactor.

The catalysed reaction is D-ribulose 5-phosphate = D-xylulose 5-phosphate. Its pathway is carbohydrate degradation; pentose phosphate pathway; D-xylulose 5-phosphate from D-ribulose 5-phosphate (non-oxidative stage): step 1/1. Its function is as follows. Catalyzes the reversible epimerization of D-ribulose 5-phosphate to D-xylulose 5-phosphate. The sequence is that of Ribulose-phosphate 3-epimerase (RPE1) from Candida glabrata (strain ATCC 2001 / BCRC 20586 / JCM 3761 / NBRC 0622 / NRRL Y-65 / CBS 138) (Yeast).